The sequence spans 213 residues: LexA repressor 2 (213 aa).

A DNA-binding region (H-T-H motif) is located at residues Q27–E47. Catalysis depends on for autocatalytic cleavage activity residues S133 and K170.

Belongs to the peptidase S24 family. Homodimer.

The enzyme catalyses Hydrolysis of Ala-|-Gly bond in repressor LexA.. In terms of biological role, represses a number of genes involved in the response to DNA damage (SOS response), including recA and lexA. In the presence of single-stranded DNA, RecA interacts with LexA causing an autocatalytic cleavage which disrupts the DNA-binding part of LexA, leading to derepression of the SOS regulon and eventually DNA repair. This Xanthomonas oryzae pv. oryzae (strain KACC10331 / KXO85) protein is LexA repressor 2.